We begin with the raw amino-acid sequence, 679 residues long: DNA ligase (679 aa).

NAD(+)-binding positions include 32–36 (DTLYD), 81–82 (SL), and Glu-115. The N6-AMP-lysine intermediate role is filled by Lys-117. The NAD(+) site is built by Arg-138, Glu-175, Lys-293, and Lys-317. Zn(2+)-binding residues include Cys-411, Cys-414, Cys-429, and Cys-434. The 79-residue stretch at 601-679 (NSSGALLGKT…EAELQKLLST (79 aa)) folds into the BRCT domain.

It belongs to the NAD-dependent DNA ligase family. LigA subfamily. Requires Mg(2+) as cofactor. Mn(2+) is required as a cofactor.

The enzyme catalyses NAD(+) + (deoxyribonucleotide)n-3'-hydroxyl + 5'-phospho-(deoxyribonucleotide)m = (deoxyribonucleotide)n+m + AMP + beta-nicotinamide D-nucleotide.. Its function is as follows. DNA ligase that catalyzes the formation of phosphodiester linkages between 5'-phosphoryl and 3'-hydroxyl groups in double-stranded DNA using NAD as a coenzyme and as the energy source for the reaction. It is essential for DNA replication and repair of damaged DNA. This Parasynechococcus marenigrum (strain WH8102) protein is DNA ligase.